The primary structure comprises 334 residues: Porphobilinogen deaminase (334 aa).

Cysteine 255 carries the S-(dipyrrolylmethanemethyl)cysteine modification.

This sequence belongs to the HMBS family. As to quaternary structure, monomer. It depends on dipyrromethane as a cofactor.

The enzyme catalyses 4 porphobilinogen + H2O = hydroxymethylbilane + 4 NH4(+). The protein operates within porphyrin-containing compound metabolism; protoporphyrin-IX biosynthesis; coproporphyrinogen-III from 5-aminolevulinate: step 2/4. Functionally, tetrapolymerization of the monopyrrole PBG into the hydroxymethylbilane pre-uroporphyrinogen in several discrete steps. This is Porphobilinogen deaminase from Burkholderia orbicola (strain MC0-3).